We begin with the raw amino-acid sequence, 177 residues long: Disulfide bond formation protein B (177 aa).

Over 1-14 (MLIFFKNLSMKRST) the chain is Cytoplasmic. A helical transmembrane segment spans residues 15–31 (WILLFISALVLESTALY). Topologically, residues 32 to 49 (FQHGMGLNPCVMCIYERV) are periplasmic. Cys-41 and Cys-44 are oxidised to a cystine. Residues 50–65 (AILGILFSGLIGCIAP) form a helical membrane-spanning segment. At 66 to 72 (KWLVLRI) the chain is on the cytoplasmic side. A helical transmembrane segment spans residues 73–90 (LALLIGLGSAVKGLLLAI). Topologically, residues 91 to 145 (KHLDYQINVYPWNQCAMVPDFPQTLPLDKWFPNIFMPSGSCSDITWSFLGFSMVQ) are periplasmic. Cys-105 and Cys-131 form a disulfide bridge. A helical transmembrane segment spans residues 146-164 (WIIVIFACYFLFFIILSIS). Residues 165-177 (QFKKVRKNRMLFR) are Cytoplasmic-facing.

The protein belongs to the DsbB family.

The protein localises to the cell inner membrane. In terms of biological role, required for disulfide bond formation in some periplasmic proteins. Acts by oxidizing the DsbA protein. This is Disulfide bond formation protein B from Histophilus somni (strain 129Pt) (Haemophilus somnus).